Here is a 428-residue protein sequence, read N- to C-terminus: Chaperone SurA (428 aa).

Positions 1–20 (MKNWKTLLLGIAMIANTSFA) are cleaved as a signal peptide. 2 consecutive PpiC domains span residues 171-272 (STEL…KVND) and 282-382 (VTEV…ELLD).

The protein resides in the periplasm. It catalyses the reaction [protein]-peptidylproline (omega=180) = [protein]-peptidylproline (omega=0). In terms of biological role, chaperone involved in the correct folding and assembly of outer membrane proteins. Recognizes specific patterns of aromatic residues and the orientation of their side chains, which are found more frequently in integral outer membrane proteins. May act in both early periplasmic and late outer membrane-associated steps of protein maturation. In Shigella dysenteriae serotype 1 (strain Sd197), this protein is Chaperone SurA.